Reading from the N-terminus, the 101-residue chain is MRLMIMFDLPVATSKDRRNYRRFRRALIDEGFLMIQYSVYVRVCKTKKSAAYMEQRIATVKPPTGIVQTLMVTEAQYQSMHFMVGTEKQDIRNSADRTVMI.

Asp-8 is a binding site for Mg(2+).

This sequence belongs to the CRISPR-associated endoribonuclease Cas2 protein family. Homodimer, forms a heterotetramer with a Cas1 homodimer. Mg(2+) serves as cofactor.

Functionally, CRISPR (clustered regularly interspaced short palindromic repeat), is an adaptive immune system that provides protection against mobile genetic elements (viruses, transposable elements and conjugative plasmids). CRISPR clusters contain sequences complementary to antecedent mobile elements and target invading nucleic acids. CRISPR clusters are transcribed and processed into CRISPR RNA (crRNA). Functions as a ssRNA-specific endoribonuclease. Involved in the integration of spacer DNA into the CRISPR cassette. In Lacticaseibacillus rhamnosus (strain ATCC 53103 / LMG 18243 / GG) (Lactobacillus rhamnosus), this protein is CRISPR-associated endoribonuclease Cas2.